The primary structure comprises 342 residues: Holliday junction branch migration complex subunit RuvB (342 aa).

Positions 1 to 179 (MTNILSPEKS…FGIPMRLNFY (179 aa)) are large ATPase domain (RuvB-L). Residues Ile18, Arg19, Gly60, Lys63, Thr64, Thr65, 126–128 (EDF), Arg169, Tyr179, and Arg216 contribute to the ATP site. Thr64 lines the Mg(2+) pocket. The interval 180 to 250 (NTEELKKVLN…ISDFGLKRLE (71 aa)) is small ATPAse domain (RuvB-S). The interval 253 to 342 (RIGLDSNDYR…HQFNIFNENE (90 aa)) is head domain (RuvB-H). Positions 289, 308, and 313 each coordinate DNA.

It belongs to the RuvB family. As to quaternary structure, homohexamer. Forms an RuvA(8)-RuvB(12)-Holliday junction (HJ) complex. HJ DNA is sandwiched between 2 RuvA tetramers; dsDNA enters through RuvA and exits via RuvB. An RuvB hexamer assembles on each DNA strand where it exits the tetramer. Each RuvB hexamer is contacted by two RuvA subunits (via domain III) on 2 adjacent RuvB subunits; this complex drives branch migration. In the full resolvosome a probable DNA-RuvA(4)-RuvB(12)-RuvC(2) complex forms which resolves the HJ.

The protein resides in the cytoplasm. The enzyme catalyses ATP + H2O = ADP + phosphate + H(+). Functionally, the RuvA-RuvB-RuvC complex processes Holliday junction (HJ) DNA during genetic recombination and DNA repair, while the RuvA-RuvB complex plays an important role in the rescue of blocked DNA replication forks via replication fork reversal (RFR). RuvA specifically binds to HJ cruciform DNA, conferring on it an open structure. The RuvB hexamer acts as an ATP-dependent pump, pulling dsDNA into and through the RuvAB complex. RuvB forms 2 homohexamers on either side of HJ DNA bound by 1 or 2 RuvA tetramers; 4 subunits per hexamer contact DNA at a time. Coordinated motions by a converter formed by DNA-disengaged RuvB subunits stimulates ATP hydrolysis and nucleotide exchange. Immobilization of the converter enables RuvB to convert the ATP-contained energy into a lever motion, pulling 2 nucleotides of DNA out of the RuvA tetramer per ATP hydrolyzed, thus driving DNA branch migration. The RuvB motors rotate together with the DNA substrate, which together with the progressing nucleotide cycle form the mechanistic basis for DNA recombination by continuous HJ branch migration. Branch migration allows RuvC to scan DNA until it finds its consensus sequence, where it cleaves and resolves cruciform DNA. The protein is Holliday junction branch migration complex subunit RuvB of Rickettsia peacockii (strain Rustic).